We begin with the raw amino-acid sequence, 244 residues long: MGLELYLDLLSQPSRAVYIFAKKNGIPFQLRTVDLLKGQHLSEQFSQVNCLKKVPVLKDGSFVLTESTAILIYLSSKYQVADHWYPADLQARAQVHEYLGWHADNIRGTFGVLLWTKVLGPLIGVQVPEEKVERNRNSMVLALQRLEDKFLRDRAFIAGQQVTLADLMSLEELIQPVALGCNLFEGRPQLTAWRERVEAFLGAELCQEAHNPIMSVLGQAAKKTLPVPPPEAHASMMLRIARIP.

The GST N-terminal domain maps to 2–82 (GLELYLDLLS…YLSSKYQVAD (81 aa)). Residues 40–41 (HL), 53–54 (KV), 66–67 (ES), and 104–107 (DNIR) each bind glutathione. Residues 88–230 (DLQARAQVHE…AKKTLPVPPP (143 aa)) enclose the GST C-terminal domain.

Belongs to the GST superfamily. Theta family. Homodimer. Highest values found in liver followed by testis, adrenal gland, kidney, lung, brain and skeletal muscle. In liver, highest expression found in central vein limiting plate hepatocytes. In lung, expressed mainly in club cells of the bronchiolar epithelium and, at low levels, in type II alveolar cells.

It is found in the cytoplasm. The protein localises to the cytosol. The protein resides in the nucleus. The catalysed reaction is RX + glutathione = an S-substituted glutathione + a halide anion + H(+). In terms of biological role, catalyzes the inactivation of reactive sulfate esters in carcinogenic arylmethanols. Highest activity towards ethacrynic acid and cumene hydroperoxide. The chain is Glutathione S-transferase theta-2 (Gstt2) from Rattus norvegicus (Rat).